A 459-amino-acid chain; its full sequence is Argininosuccinate lyase (459 aa).

It belongs to the lyase 1 family. Argininosuccinate lyase subfamily.

It is found in the cytoplasm. The enzyme catalyses 2-(N(omega)-L-arginino)succinate = fumarate + L-arginine. Its pathway is amino-acid biosynthesis; L-arginine biosynthesis; L-arginine from L-ornithine and carbamoyl phosphate: step 3/3. This Prochlorococcus marinus (strain MIT 9215) protein is Argininosuccinate lyase.